Here is a 94-residue protein sequence, read N- to C-terminus: Prepro-gonadotropin-releasing hormone-like protein (94 aa).

A signal peptide spans 1–21 (MNACILLTTLVTMITIEKVQG).

The protein localises to the secreted. Neuropeptide involved in reproduction. May be an important hormone in the regulation of gonadal maturation. In Ruditapes philippinarum (Japanese carpet shell), this protein is Prepro-gonadotropin-releasing hormone-like protein.